The chain runs to 375 residues: MAVRLCDVASLLRSGSWAAEPWTGQVIAAMETQLSNGPTCNNTANCPNTINNCSSPVESSNTEDSKTNLIVNYLPQNMTQEELKSLFGSIGEIESCKLVRDKITGQSLGYGFVNYIDPKDAEKAINTLNGLRLQTKTIKVSYARPSSASIRDANLYVSGLPKTMTQKELEQLFSQYGRIITSRILVDQVTGVSRGVGFIRFDKRIEAEEAIKGLNGQKPPGATEPITVKFANNPSQKVNHTILSQLYQSPNRRYPGPLAQQAQRFSRFSPMTIDGMTSLAGINFPGHAGTGWCIFVYNLAPDADESILWQMFGPFGAVTNVKVIRDFNTNKCKGFGFVTMTNYDEAAMAIASLNGYRLGDRVLQVSFKTSKTHKA.

RRM domains are found at residues 67–145 (TNLI…YARP), 153–233 (ANLY…FANN), and 292–370 (WCIF…FKTS).

The protein belongs to the RRM elav family. Part of a ribonucleoprotein (RNP) complex, at least composed of elavl1/elrA and/or elavl2/elrB, igf2bp3/vg1RBP, ddx6/Xp54, ybx2/frgy2, lsm14b/rap55b and, in a subset of RNP complexes, stau1/staufen. Binds RNA as a homooligomer.

It is found in the cytoplasm. Its subcellular location is the cell cortex. In terms of biological role, binds to poly-U elements and AU-rich elements (AREs) in the 3'-UTR of target mRNAs. Required for the vegetal localization of vg1 mRNA. Probably required for nervous system development. In Xenopus tropicalis (Western clawed frog), this protein is ELAV-like protein 2.